The primary structure comprises 608 residues: Fatty acid amide hydrolase (608 aa).

Active-site charge relay system residues include Lys-206 and Ser-282. 303 to 306 (GGGS) serves as a coordination point for substrate. Ser-306 serves as the catalytic Acyl-ester intermediate.

It belongs to the amidase family. As to quaternary structure, forms homodimers.

It localises to the endoplasmic reticulum membrane. It is found in the cell membrane. It catalyses the reaction N-(9Z,12Z-octadecadienoyl)-ethanolamine + H2O = ethanolamine + (9Z,12Z)-octadecadienoate. It carries out the reaction N-hexadecanoylethanolamine + H2O = ethanolamine + hexadecanoate. The enzyme catalyses N-dodecanoylethanolamine + H2O = dodecanoate + ethanolamine. Inhibited by methyl arachidonyl fluorophosphonate (MAFP). Its function is as follows. Catalyzes the hydrolysis of bioactive endogenous fatty acid amides to their corresponding acids. The hydrolysis of endogenous amidated lipids terminates their participation as lipid mediators in various signaling systems. Converts a wide range of N-acylethanolamines (NAEs) to their corresponding free fatty acids and ethanolamine. The chain is Fatty acid amide hydrolase from Oryza sativa subsp. japonica (Rice).